Consider the following 82-residue polypeptide: Small ribosomal subunit protein bS18 (82 aa).

Residues 1-20 (MVDINQIPTRRPFHRRRKTC) form a disordered region.

The protein belongs to the bacterial ribosomal protein bS18 family. As to quaternary structure, part of the 30S ribosomal subunit. Forms a tight heterodimer with protein bS6.

Its function is as follows. Binds as a heterodimer with protein bS6 to the central domain of the 16S rRNA, where it helps stabilize the platform of the 30S subunit. The polypeptide is Small ribosomal subunit protein bS18 (Brucella anthropi (strain ATCC 49188 / DSM 6882 / CCUG 24695 / JCM 21032 / LMG 3331 / NBRC 15819 / NCTC 12168 / Alc 37) (Ochrobactrum anthropi)).